We begin with the raw amino-acid sequence, 359 residues long: Probable NAD(P)H nitroreductase PigM (359 aa).

It belongs to the nitroreductase family. FMN serves as cofactor.

Its pathway is antibiotic biosynthesis; prodigiosin biosynthesis. Involved in the biosynthesis of 4-methoxy-2,2'-bipyrrole-5-carbaldehyde (MBC), one of the terminal products involved in the biosynthesis of the red antibiotic prodigiosin (Pig). Catalyzes the oxidation of the hydroxy group of 4-hydroxy-2,2'-bipyrrole-5-methanol (HBM) to yield 4-methoxy-2,2'-bipyrrole-5-carbaldehyde (MBC). The sequence is that of Probable NAD(P)H nitroreductase PigM from Serratia sp. (strain ATCC 39006) (Prodigiosinella confusarubida).